Here is a 156-residue protein sequence, read N- to C-terminus: Small ribosomal subunit protein uS7 (156 aa).

The protein belongs to the universal ribosomal protein uS7 family. Part of the 30S ribosomal subunit. Contacts proteins S9 and S11.

Functionally, one of the primary rRNA binding proteins, it binds directly to 16S rRNA where it nucleates assembly of the head domain of the 30S subunit. Is located at the subunit interface close to the decoding center, probably blocks exit of the E-site tRNA. The sequence is that of Small ribosomal subunit protein uS7 from Carsonella ruddii (strain PV).